The chain runs to 150 residues: Large ribosomal subunit protein uL11 (150 aa).

This sequence belongs to the universal ribosomal protein uL11 family. Part of the ribosomal stalk of the 50S ribosomal subunit. Interacts with L10 and the large rRNA to form the base of the stalk. L10 forms an elongated spine to which L12 dimers bind in a sequential fashion forming a multimeric L10(L12)X complex. In terms of processing, one or more lysine residues are methylated.

Functionally, forms part of the ribosomal stalk which helps the ribosome interact with GTP-bound translation factors. The chain is Large ribosomal subunit protein uL11 from Azobacteroides pseudotrichonymphae genomovar. CFP2.